The following is a 191-amino-acid chain: Sec-independent protein translocase protein TatB (191 aa).

Residues 1-21 (MFDIGFSELFLILVIGLLVLG) form a helical membrane-spanning segment. Polar residues predominate over residues 119–138 (ESTSQTLTEQLTPSEQVTEA). Disordered stretches follow at residues 119-139 (ESTSQTLTEQLTPSEQVTEAT) and 168-191 (DDDDEPVFASKVKPQTEEIQDKKA). The span at 181–191 (PQTEEIQDKKA) shows a compositional bias: basic and acidic residues.

It belongs to the TatB family. As to quaternary structure, the Tat system comprises two distinct complexes: a TatABC complex, containing multiple copies of TatA, TatB and TatC subunits, and a separate TatA complex, containing only TatA subunits. Substrates initially bind to the TatABC complex, which probably triggers association of the separate TatA complex to form the active translocon.

It is found in the cell inner membrane. Its function is as follows. Part of the twin-arginine translocation (Tat) system that transports large folded proteins containing a characteristic twin-arginine motif in their signal peptide across membranes. Together with TatC, TatB is part of a receptor directly interacting with Tat signal peptides. TatB may form an oligomeric binding site that transiently accommodates folded Tat precursor proteins before their translocation. The protein is Sec-independent protein translocase protein TatB of Pasteurella multocida (strain Pm70).